The chain runs to 138 residues: Large ribosomal subunit protein uL16 (138 aa).

Residues 1–21 are compositionally biased toward basic residues; that stretch reads MLIPRKVKHRKQHHPSLRGRA. A disordered region spans residues 1–22; it reads MLIPRKVKHRKQHHPSLRGRAK.

Belongs to the universal ribosomal protein uL16 family. In terms of assembly, part of the 50S ribosomal subunit.

Its function is as follows. Binds 23S rRNA and is also seen to make contacts with the A and possibly P site tRNAs. The sequence is that of Large ribosomal subunit protein uL16 from Thermobifida fusca (strain YX).